The following is a 351-amino-acid chain: Dihydroorotate dehydrogenase (quinone) (351 aa).

Residues 61 to 65 (AGLDK) and Thr-85 each bind FMN. Lys-65 lines the substrate pocket. Position 110 to 114 (110 to 114 (NRMGF)) interacts with substrate. Residues Asn-139 and Asn-172 each contribute to the FMN site. Asn-172 lines the substrate pocket. The Nucleophile role is filled by Ser-175. Asn-177 contacts substrate. Residues Lys-217 and Thr-245 each coordinate FMN. A substrate-binding site is contributed by 246–247 (NT). Residues Gly-268, Gly-297, and 318–319 (YT) each bind FMN.

It belongs to the dihydroorotate dehydrogenase family. Type 2 subfamily. Monomer. FMN serves as cofactor.

Its subcellular location is the cell membrane. It catalyses the reaction (S)-dihydroorotate + a quinone = orotate + a quinol. It functions in the pathway pyrimidine metabolism; UMP biosynthesis via de novo pathway; orotate from (S)-dihydroorotate (quinone route): step 1/1. Functionally, catalyzes the conversion of dihydroorotate to orotate with quinone as electron acceptor. This Xylella fastidiosa (strain M23) protein is Dihydroorotate dehydrogenase (quinone).